A 30-amino-acid chain; its full sequence is Cycloviolacin-O20 (30 aa).

A cross-link (cyclopeptide (Gly-Asp)) is located at residues 1–30 (GIPCGESCVWIPCLTSAIGCSCKSKVCYRD). 3 cysteine pairs are disulfide-bonded: Cys-4-Cys-20, Cys-8-Cys-22, and Cys-13-Cys-27.

In terms of processing, this is a cyclic peptide.

Probably participates in a plant defense mechanism. This chain is Cycloviolacin-O20, found in Viola odorata (Sweet violet).